Reading from the N-terminus, the 739-residue chain is Polyribonucleotide nucleotidyltransferase (739 aa).

Asp-489 and Asp-495 together coordinate Mg(2+). The KH domain maps to 556–615 (PKIDTIKIDVDKIKIVIGKGGETIDKIIAETGVKIDIDEDGLVAIFSPDRAAIERTKEII). One can recognise an S1 motif domain in the interval 625–693 (DEVFQAKVVR…DKGRIDASMK (69 aa)). The disordered stretch occupies residues 699-739 (PEGYVEPEKRERSEKPRRHKEHKEKKDNNFGEFKFHKVDKK). Residues 722–739 (EKKDNNFGEFKFHKVDKK) are compositionally biased toward basic and acidic residues.

The protein belongs to the polyribonucleotide nucleotidyltransferase family. Mg(2+) serves as cofactor.

It is found in the cytoplasm. It catalyses the reaction RNA(n+1) + phosphate = RNA(n) + a ribonucleoside 5'-diphosphate. In terms of biological role, involved in mRNA degradation. Catalyzes the phosphorolysis of single-stranded polyribonucleotides processively in the 3'- to 5'-direction. The chain is Polyribonucleotide nucleotidyltransferase from Streptococcus suis (strain 98HAH33).